The chain runs to 426 residues: MASAKEISQYLKRFSQLDAKRFAVVKVGGAVLRDDLEALTSSLSFLQEVGLTPIVLHGAGPQLDAELSAAGIEKQTVNGLRVTSPHALAIVRKVFQASNLKLVEALQQNGARATSITGGVFEAEYLNRDTYGLVGEVKAVNLAPIEASLQAGSIPVITSLGETPSGQILNVNADFAANELVQELQPYKIIFLTGTGGLLDAEGKLIDSINLSTEYDHLMQQPWINGGMRVKIEQIKDLLDRLPLESSVSITRPADLAKELFTHKGSGTLVRRGERVLRATSWDELDLPRLTSLIESSFGRTLVPDYFSNTKLLRAYVSENYRAAVILTDEGMLGASALIYLDKFAVLDDAQGEGLGRAVWNVMREETPQLFWRSRHNNQVNIFYYAESDGCIKQEKWKVFWYGLENFEQIQHCVAHCATRQPTLLG.

Residues 1–252 are acetylglutamate kinase; sequence MASAKEISQY…PLESSVSITR (252 aa). Substrate is bound by residues 59–60, arginine 81, and asparagine 170; that span reads AG. The unknown stretch occupies residues 253 to 426; the sequence is PADLAKELFT…CATRQPTLLG (174 aa). One can recognise an N-acetyltransferase domain in the interval 274 to 425; it reads ERVLRATSWD…HCATRQPTLL (152 aa).

In the N-terminal section; belongs to the acetylglutamate kinase family. ArgB subfamily.

It localises to the cytoplasm. It carries out the reaction N-acetyl-L-glutamate + ATP = N-acetyl-L-glutamyl 5-phosphate + ADP. It functions in the pathway amino-acid biosynthesis; L-arginine biosynthesis; N(2)-acetyl-L-ornithine from L-glutamate: step 2/4. In Xanthomonas campestris pv. campestris (strain ATCC 33913 / DSM 3586 / NCPPB 528 / LMG 568 / P 25), this protein is Acetylglutamate kinase (argB).